Here is a 254-residue protein sequence, read N- to C-terminus: 3-oxo-5-alpha-steroid 4-dehydrogenase 2 (254 aa).

4 helical membrane passes run 8-28 (SPVLAGSATLVALGALALYVA), 72-92 (PLSLFGPPGTVLLGLFCLHYF), 146-166 (FSLGVFLFILGMGINIHSDYI), and 206-226 (LATWSLPALAFAFFSLCFLGL).

The protein belongs to the steroid 5-alpha reductase family. As to expression, expressed in high levels in the prostate and many other androgen-sensitive tissues.

The protein resides in the microsome membrane. It localises to the endoplasmic reticulum membrane. It catalyses the reaction a 3-oxo-5alpha-steroid + NADP(+) = a 3-oxo-Delta(4)-steroid + NADPH + H(+). The enzyme catalyses 17beta-hydroxy-5alpha-androstan-3-one + NADP(+) = testosterone + NADPH + H(+). The catalysed reaction is 5alpha-pregnane-3,20-dione + NADP(+) = progesterone + NADPH + H(+). Functionally, converts testosterone (T) into 5-alpha-dihydrotestosterone (DHT) and progesterone or corticosterone into their corresponding 5-alpha-3-oxosteroids. It plays a central role in sexual differentiation and androgen physiology. In Homo sapiens (Human), this protein is 3-oxo-5-alpha-steroid 4-dehydrogenase 2 (SRD5A2).